We begin with the raw amino-acid sequence, 488 residues long: MFARPAIRMRCATGLLAIGTLLMLAGCGEEPKPSVLEQVKAEGELRVVTRNSPATYFQDRNGATGFEYELAKRFATDLGLELKIETADNLDSLFASLGHVDGPVLAAAGLVETPQRQRQARFSVPYLEVTPQIIYRQGETRPTKAEDLLGKRILVLAGSSHAEQLEALKLELPELTFEVSDAVEVVDLLRMVDEGQIDLTLVDSNELAMNQVYFPNVRVAFDLGDTNTMRWAVAPGEDDSLLLEIDAFLERSQANGTLQRLKERYYGHVDVLGYVGAYTFAQHLQQRLPRYEKMFRQAGHANQIDWRLLAAMGYQESLWQPNATSKTGVRGLMMLTQRTAQSVGVSNRLDPKQSIDGGARYFVQIHQQLPESIQEPDRTWFALAAYNVGGGHLEDARKLTEAEGLDPNKWMDVQKILPRLAQKQWYSKTRYGYARGGEPVHFVRNVRRYYDILTWVTQPQLEGTQVAENGIHLPGIDKRTLDEQTPPL.

The N-terminal stretch at 1 to 25 is a signal peptide; sequence MFARPAIRMRCATGLLAIGTLLMLA. The tract at residues 26-269 is non-LT domain; it reads GCGEEPKPSV…RLKERYYGHV (244 aa). Residues 270–488 form an LT domain region; the sequence is DVLGYVGAYT…RTLDEQTPPL (219 aa). The active site involves Glu316.

In the N-terminal section; belongs to the bacterial solute-binding protein 3 family. This sequence in the C-terminal section; belongs to the transglycosylase Slt family.

The protein resides in the cell outer membrane. It carries out the reaction Exolytic cleavage of the (1-&gt;4)-beta-glycosidic linkage between N-acetylmuramic acid (MurNAc) and N-acetylglucosamine (GlcNAc) residues in peptidoglycan, from either the reducing or the non-reducing ends of the peptidoglycan chains, with concomitant formation of a 1,6-anhydrobond in the MurNAc residue.. Its function is as follows. Murein-degrading enzyme that degrades murein glycan strands and insoluble, high-molecular weight murein sacculi, with the concomitant formation of a 1,6-anhydromuramoyl product. Lytic transglycosylases (LTs) play an integral role in the metabolism of the peptidoglycan (PG) sacculus. Their lytic action creates space within the PG sacculus to allow for its expansion as well as for the insertion of various structures such as secretion systems and flagella. The protein is Membrane-bound lytic murein transglycosylase F of Ectopseudomonas mendocina (strain ymp) (Pseudomonas mendocina).